Reading from the N-terminus, the 372-residue chain is tRNA 2-selenouridine synthase (372 aa).

The 124-residue stretch at 19 to 142 folds into the Rhodanese domain; it reads LASGHPIMDV…MRQYLIDTID (124 aa). Cys-102 serves as the catalytic S-selanylcysteine intermediate.

The protein belongs to the SelU family. In terms of assembly, monomer.

The enzyme catalyses 5-methylaminomethyl-2-thiouridine(34) in tRNA + selenophosphate + (2E)-geranyl diphosphate + H2O + H(+) = 5-methylaminomethyl-2-selenouridine(34) in tRNA + (2E)-thiogeraniol + phosphate + diphosphate. The catalysed reaction is 5-methylaminomethyl-2-thiouridine(34) in tRNA + (2E)-geranyl diphosphate = 5-methylaminomethyl-S-(2E)-geranyl-thiouridine(34) in tRNA + diphosphate. It catalyses the reaction 5-methylaminomethyl-S-(2E)-geranyl-thiouridine(34) in tRNA + selenophosphate + H(+) = 5-methylaminomethyl-2-(Se-phospho)selenouridine(34) in tRNA + (2E)-thiogeraniol. It carries out the reaction 5-methylaminomethyl-2-(Se-phospho)selenouridine(34) in tRNA + H2O = 5-methylaminomethyl-2-selenouridine(34) in tRNA + phosphate. In terms of biological role, involved in the post-transcriptional modification of the uridine at the wobble position (U34) of tRNA(Lys), tRNA(Glu) and tRNA(Gln). Catalyzes the conversion of 2-thiouridine (S2U-RNA) to 2-selenouridine (Se2U-RNA). Acts in a two-step process involving geranylation of 2-thiouridine (S2U) to S-geranyl-2-thiouridine (geS2U) and subsequent selenation of the latter derivative to 2-selenouridine (Se2U) in the tRNA chain. This chain is tRNA 2-selenouridine synthase, found in Shewanella loihica (strain ATCC BAA-1088 / PV-4).